We begin with the raw amino-acid sequence, 456 residues long: Trigger factor (456 aa).

The region spanning 192-277 (GDTVVIDFVG…IHEVKTKEVP (86 aa)) is the PPIase FKBP-type domain.

Belongs to the FKBP-type PPIase family. Tig subfamily.

Its subcellular location is the cytoplasm. The enzyme catalyses [protein]-peptidylproline (omega=180) = [protein]-peptidylproline (omega=0). Involved in protein export. Acts as a chaperone by maintaining the newly synthesized protein in an open conformation. Functions as a peptidyl-prolyl cis-trans isomerase. This is Trigger factor from Streptococcus pyogenes serotype M4 (strain MGAS10750).